The sequence spans 591 residues: Aspartate--tRNA ligase (591 aa).

Residue Glu-171 participates in L-aspartate binding. Positions 195-198 are aspartate; sequence QLFK. Arg-217 provides a ligand contact to L-aspartate. Residues 217–219 and Gln-226 each bind ATP; that span reads RDE. His-448 lines the L-aspartate pocket. Glu-482 serves as a coordination point for ATP. Arg-489 is an L-aspartate binding site. Position 534 to 537 (534 to 537) interacts with ATP; it reads GLDR.

The protein belongs to the class-II aminoacyl-tRNA synthetase family. Type 1 subfamily. Homodimer.

The protein resides in the cytoplasm. The enzyme catalyses tRNA(Asp) + L-aspartate + ATP = L-aspartyl-tRNA(Asp) + AMP + diphosphate. Catalyzes the attachment of L-aspartate to tRNA(Asp) in a two-step reaction: L-aspartate is first activated by ATP to form Asp-AMP and then transferred to the acceptor end of tRNA(Asp). This is Aspartate--tRNA ligase from Aliivibrio salmonicida (strain LFI1238) (Vibrio salmonicida (strain LFI1238)).